Here is a 112-residue protein sequence, read N- to C-terminus: Large ribosomal subunit protein uL24 (112 aa).

Belongs to the universal ribosomal protein uL24 family. As to quaternary structure, part of the 50S ribosomal subunit.

In terms of biological role, one of two assembly initiator proteins, it binds directly to the 5'-end of the 23S rRNA, where it nucleates assembly of the 50S subunit. Functionally, one of the proteins that surrounds the polypeptide exit tunnel on the outside of the subunit. This chain is Large ribosomal subunit protein uL24, found in Magnetococcus marinus (strain ATCC BAA-1437 / JCM 17883 / MC-1).